Reading from the N-terminus, the 329-residue chain is Basic leucine zipper 61 (329 aa).

2 disordered regions span residues 1-22 (MAQL…FSSQ) and 98-204 (DDVH…HDPK). The span at 10–22 (TMTTPNWPDFSSQ) shows a compositional bias: polar residues. The span at 119–133 (PTRSSSNTSTPSDHN) shows a compositional bias: low complexity. The segment covering 139-154 (DNNKEAPPSDHDHHMD) has biased composition (basic and acidic residues). The segment covering 155–169 (NNVANQNNAAGNNYN) has biased composition (low complexity). Residues 202–254 (DPKRVKRILANRQSAQRSRVRKLQYISELERSVTSLQTEVSVLSPRVAFLDHQ) enclose the bZIP domain. Residues 204-223 (KRVKRILANRQSAQRSRVRK) are basic motif. The leucine-zipper stretch occupies residues 230-251 (LERSVTSLQTEVSVLSPRVAFL). Residues 304–313 (KMENNVSDQS) show a composition bias toward polar residues. Positions 304–329 (KMENNVSDQSPADIKPSVEKEQLLNV) are disordered. Residues 319–329 (PSVEKEQLLNV) are compositionally biased toward basic and acidic residues.

In terms of assembly, forms heterodimers with BZIP18, BZIP43 and VIP1/BZIP51.

The protein localises to the nucleus. Its function is as follows. Transcriptional activator. The chain is Basic leucine zipper 61 from Arabidopsis thaliana (Mouse-ear cress).